Consider the following 705-residue polypeptide: Elongation factor G (705 aa).

Positions 8–290 constitute a tr-type G domain; it reads ERYRNFGIMA…GVVHLLPSPA (283 aa). GTP is bound by residues 17 to 24, 88 to 92, and 142 to 145; these read AHIDAGKT, DTPGH, and NKMD. The segment at 290-309 is disordered; the sequence is ADRPPVQGIDEDEKEDTRAA.

This sequence belongs to the TRAFAC class translation factor GTPase superfamily. Classic translation factor GTPase family. EF-G/EF-2 subfamily.

The protein localises to the cytoplasm. In terms of biological role, catalyzes the GTP-dependent ribosomal translocation step during translation elongation. During this step, the ribosome changes from the pre-translocational (PRE) to the post-translocational (POST) state as the newly formed A-site-bound peptidyl-tRNA and P-site-bound deacylated tRNA move to the P and E sites, respectively. Catalyzes the coordinated movement of the two tRNA molecules, the mRNA and conformational changes in the ribosome. The polypeptide is Elongation factor G (Xanthomonas axonopodis pv. citri (strain 306)).